The primary structure comprises 259 residues: 3-deoxy-manno-octulosonate cytidylyltransferase (259 aa).

It belongs to the KdsB family.

The protein resides in the cytoplasm. It catalyses the reaction 3-deoxy-alpha-D-manno-oct-2-ulosonate + CTP = CMP-3-deoxy-beta-D-manno-octulosonate + diphosphate. It participates in nucleotide-sugar biosynthesis; CMP-3-deoxy-D-manno-octulosonate biosynthesis; CMP-3-deoxy-D-manno-octulosonate from 3-deoxy-D-manno-octulosonate and CTP: step 1/1. The protein operates within bacterial outer membrane biogenesis; lipopolysaccharide biosynthesis. Activates KDO (a required 8-carbon sugar) for incorporation into bacterial lipopolysaccharide in Gram-negative bacteria. This Maricaulis maris (strain MCS10) (Caulobacter maris) protein is 3-deoxy-manno-octulosonate cytidylyltransferase.